The chain runs to 486 residues: Homoserine O-acetyltransferase (486 aa).

Positions 66–436 (NVLVICHALT…PEGHDAFLLE (371 aa)) constitute an AB hydrolase-1 domain. The Nucleophile role is filled by Ser162. Positions 248-281 (KFSRRSPSIAQQQKAQREETRKPSTVSEHSLQIH) are disordered. Polar residues-rich tracts occupy residues 250–261 (SRRSPSIAQQQK) and 270–280 (PSTVSEHSLQI). Residues Asp401 and His430 contribute to the active site.

It belongs to the AB hydrolase superfamily. MetX family.

It localises to the cytoplasm. It catalyses the reaction L-homoserine + acetyl-CoA = O-acetyl-L-homoserine + CoA. The protein operates within amino-acid biosynthesis; L-methionine biosynthesis via de novo pathway; O-acetyl-L-homoserine from L-homoserine: step 1/1. Functionally, commits homoserine to the methionine biosynthesis pathway by catalyzing its O-acetylation. This is Homoserine O-acetyltransferase (MET2) from Saccharomyces cerevisiae (strain ATCC 204508 / S288c) (Baker's yeast).